The following is a 184-amino-acid chain: NADH-quinone oxidoreductase subunit B (184 aa).

[4Fe-4S] cluster-binding residues include C37, C38, C103, and C132.

Belongs to the complex I 20 kDa subunit family. In terms of assembly, NDH-1 is composed of 14 different subunits. Subunits NuoB, C, D, E, F, and G constitute the peripheral sector of the complex. It depends on [4Fe-4S] cluster as a cofactor.

Its subcellular location is the cell membrane. It catalyses the reaction a quinone + NADH + 5 H(+)(in) = a quinol + NAD(+) + 4 H(+)(out). Its function is as follows. NDH-1 shuttles electrons from NADH, via FMN and iron-sulfur (Fe-S) centers, to quinones in the respiratory chain. The immediate electron acceptor for the enzyme in this species is believed to be a menaquinone. Couples the redox reaction to proton translocation (for every two electrons transferred, four hydrogen ions are translocated across the cytoplasmic membrane), and thus conserves the redox energy in a proton gradient. The polypeptide is NADH-quinone oxidoreductase subunit B (Mycobacteroides abscessus (strain ATCC 19977 / DSM 44196 / CCUG 20993 / CIP 104536 / JCM 13569 / NCTC 13031 / TMC 1543 / L948) (Mycobacterium abscessus)).